The following is an 854-amino-acid chain: Gamma-secretase-activating protein (854 aa).

This sequence belongs to the GSAP family. As to quaternary structure, interacts with APP; specifically interacts with the CTF-alpha product of APP. Interacts with the gamma-secretase complex. The protein is first synthesized as a holoprotein form of 98 kDa and rapidly processed into the gamma-secretase-activating protein 16 kDa C-terminal form, which constitutes the predominant form. Widely expressed.

It localises to the golgi apparatus. It is found in the trans-Golgi network. Functionally, regulator of gamma-secretase activity, which specifically activates the production of amyloid-beta protein (amyloid-beta protein 40 and amyloid-beta protein 42), without affecting the cleavage of other gamma-secretase targets such has Notch. The gamma-secretase complex is an endoprotease complex that catalyzes the intramembrane cleavage of integral membrane proteins such as Notch receptors and APP (amyloid-beta precursor protein). Specifically promotes the gamma-cleavage of APP CTF-alpha (also named APP-CTF) by the gamma-secretase complex to generate amyloid-beta, while it reduces the epsilon-cleavage of APP CTF-alpha, leading to a low production of AICD. The protein is Gamma-secretase-activating protein (GSAP) of Homo sapiens (Human).